The sequence spans 616 residues: Chaperone protein HscA (616 aa).

Belongs to the heat shock protein 70 family.

Its function is as follows. Chaperone involved in the maturation of iron-sulfur cluster-containing proteins. Has a low intrinsic ATPase activity which is markedly stimulated by HscB. Involved in the maturation of IscU. The sequence is that of Chaperone protein HscA from Shigella boydii serotype 18 (strain CDC 3083-94 / BS512).